A 442-amino-acid polypeptide reads, in one-letter code: tRNA-2-methylthio-N(6)-dimethylallyladenosine synthase (442 aa).

In terms of domain architecture, MTTase N-terminal spans 3 to 120 (KKLYIETHGC…LPEMIDAARI (118 aa)). 6 residues coordinate [4Fe-4S] cluster: Cys12, Cys49, Cys83, Cys157, Cys161, and Cys164. Residues 143–375 (RIDGPSAYVS…QHRLNQQGFE (233 aa)) enclose the Radical SAM core domain. The TRAM domain maps to 378–442 (RQMVGSVQRI…PHSLRGSLIQ (65 aa)).

It belongs to the methylthiotransferase family. MiaB subfamily. As to quaternary structure, monomer. The cofactor is [4Fe-4S] cluster.

The protein resides in the cytoplasm. The enzyme catalyses N(6)-dimethylallyladenosine(37) in tRNA + (sulfur carrier)-SH + AH2 + 2 S-adenosyl-L-methionine = 2-methylsulfanyl-N(6)-dimethylallyladenosine(37) in tRNA + (sulfur carrier)-H + 5'-deoxyadenosine + L-methionine + A + S-adenosyl-L-homocysteine + 2 H(+). Functionally, catalyzes the methylthiolation of N6-(dimethylallyl)adenosine (i(6)A), leading to the formation of 2-methylthio-N6-(dimethylallyl)adenosine (ms(2)i(6)A) at position 37 in tRNAs that read codons beginning with uridine. This Pseudomonas fluorescens (strain Pf0-1) protein is tRNA-2-methylthio-N(6)-dimethylallyladenosine synthase.